The primary structure comprises 687 residues: Amine oxidase [copper-containing] gamma 2 (687 aa).

The first 24 residues, 1-24 (MVELSFSQLLVLLLSLLFLFTTLA), serve as a signal peptide directing secretion. N-linked (GlcNAc...) asparagine glycosylation occurs at asparagine 154. A disulfide bond links cysteine 169 and cysteine 191. Asparagine 244 carries an N-linked (GlcNAc...) asparagine glycan. 333-344 (YMDAGEFGLGPS) contacts substrate. The Proton acceptor role is filled by aspartate 335. Cysteine 354 and cysteine 380 are oxidised to a cystine. 420-425 (VGNYDY) is a substrate binding site. The active-site Schiff-base intermediate with substrate; via topaquinone is tyrosine 423. Tyrosine 423 carries the 2',4',5'-topaquinone modification. Cu cation contacts are provided by histidine 480 and histidine 482. 3 residues coordinate Mn(2+): aspartate 489, methionine 490, and aspartate 491. Residues asparagine 497 and asparagine 598 are each glycosylated (N-linked (GlcNAc...) asparagine). Mn(2+) is bound by residues aspartate 632 and isoleucine 633. Histidine 643 contributes to the Cu cation binding site.

Belongs to the copper/topaquinone oxidase family. In terms of assembly, homodimer. Cu cation serves as cofactor. Requires Zn(2+) as cofactor. The cofactor is L-topaquinone. It depends on Mn(2+) as a cofactor. Post-translationally, topaquinone (TPQ) is generated by copper-dependent autoxidation of a specific tyrosyl residue. In terms of tissue distribution, expressed in roots, leaves and cotyledons.

The protein resides in the secreted. It is found in the extracellular space. It localises to the apoplast. It catalyses the reaction a primary methyl amine + O2 + H2O = an aldehyde + H2O2 + NH4(+). Its pathway is amine and polyamine degradation; putrescine degradation. Its function is as follows. Copper amine oxidase that can use putrescine and spermidine as substrates. The polypeptide is Amine oxidase [copper-containing] gamma 2 (Arabidopsis thaliana (Mouse-ear cress)).